The following is a 187-amino-acid chain: Adenine phosphoribosyltransferase (187 aa).

This sequence belongs to the purine/pyrimidine phosphoribosyltransferase family. In terms of assembly, homodimer.

Its subcellular location is the cytoplasm. The enzyme catalyses AMP + diphosphate = 5-phospho-alpha-D-ribose 1-diphosphate + adenine. The protein operates within purine metabolism; AMP biosynthesis via salvage pathway; AMP from adenine: step 1/1. In terms of biological role, catalyzes a salvage reaction resulting in the formation of AMP, that is energically less costly than de novo synthesis. The protein is Adenine phosphoribosyltransferase of Burkholderia pseudomallei (strain 668).